The primary structure comprises 426 residues: Serine--tRNA ligase (426 aa).

233–235 (TAE) contacts L-serine. 264-266 (RSE) contacts ATP. Glu287 serves as a coordination point for L-serine. 351 to 354 (EISS) is an ATP binding site. An L-serine-binding site is contributed by Ser387.

The protein belongs to the class-II aminoacyl-tRNA synthetase family. Type-1 seryl-tRNA synthetase subfamily. As to quaternary structure, homodimer. The tRNA molecule binds across the dimer.

The protein resides in the cytoplasm. It catalyses the reaction tRNA(Ser) + L-serine + ATP = L-seryl-tRNA(Ser) + AMP + diphosphate + H(+). The enzyme catalyses tRNA(Sec) + L-serine + ATP = L-seryl-tRNA(Sec) + AMP + diphosphate + H(+). The protein operates within aminoacyl-tRNA biosynthesis; selenocysteinyl-tRNA(Sec) biosynthesis; L-seryl-tRNA(Sec) from L-serine and tRNA(Sec): step 1/1. In terms of biological role, catalyzes the attachment of serine to tRNA(Ser). Is also able to aminoacylate tRNA(Sec) with serine, to form the misacylated tRNA L-seryl-tRNA(Sec), which will be further converted into selenocysteinyl-tRNA(Sec). The sequence is that of Serine--tRNA ligase from Clostridium botulinum (strain Loch Maree / Type A3).